A 119-amino-acid polypeptide reads, in one-letter code: Protein ELF4-LIKE 2 (119 aa).

Positions Ser91–Gly119 are disordered. Residues Asp93–Asn111 are compositionally biased toward polar residues.

Belongs to the EARLY FLOWERING 4 family. As to quaternary structure, homodimer.

It is found in the nucleus. Component of the central CCA1/LHY-TOC1 feedback loop in the circadian clock that promotes clock accuracy and is required for sustained rhythms in the absence of daily light/dark cycles. The protein is Protein ELF4-LIKE 2 (EFL2) of Arabidopsis thaliana (Mouse-ear cress).